Consider the following 432-residue polypeptide: Homogentisate 1,2-dioxygenase (432 aa).

The active-site Proton acceptor is histidine 287. Residues histidine 330 and glutamate 336 each contribute to the Fe cation site. Homogentisate contacts are provided by tyrosine 345 and histidine 366. Residue histidine 366 participates in Fe cation binding.

Belongs to the homogentisate dioxygenase family. Hexamer; dimer of trimers. Fe cation serves as cofactor.

It carries out the reaction homogentisate + O2 = 4-maleylacetoacetate + H(+). It functions in the pathway amino-acid degradation; L-phenylalanine degradation; acetoacetate and fumarate from L-phenylalanine: step 4/6. Functionally, involved in the catabolism of homogentisate (2,5-dihydroxyphenylacetate or 2,5-OH-PhAc), a central intermediate in the degradation of phenylalanine and tyrosine. Catalyzes the oxidative ring cleavage of the aromatic ring of homogentisate to yield maleylacetoacetate. This chain is Homogentisate 1,2-dioxygenase, found in Pseudomonas aeruginosa (strain ATCC 15692 / DSM 22644 / CIP 104116 / JCM 14847 / LMG 12228 / 1C / PRS 101 / PAO1).